Reading from the N-terminus, the 494-residue chain is MLNSRDQGNLHSGLCLWLCGFLALFKGSTGCESEEQLFHRLFAHYNRFIRPVENVSDPVTVHFELAITQLANVDEVNQIMETNLWLRHIWKDYRLRWDPTEYDGIETLRVPADNIWKPDIVLYNNAVGDFQVEGKTKALLKYDGVITWTPPAIFKSSCPMDITFFPFDHQNCSLKFGSWTYDKAEIDLLIIGSKVDMNDFWENSEWEIVDASGYKHDIKYNCCEEIYTDITYSFYIRRLPMFYTINLIIPCLFISFLTVLVFYLPSDCGEKVTLCISVLLSLTVFLLVITETIPSTSLVIPLVGEYLLFTMIFVTLSIVVTVFVLNIHYRTPATHTMPKWVKTIFLQAFPSILMMRKPLDKTKEAGGVKDPKSHTKRPAKVKFTHRGESKLLKECHHCQKSSDIAPGKRRSSQQPARWVAENSEHSSDVEDVIESVQFIAENMKSHNETNEVEDDWKYMAMVVDRVFLWVFIIVCVFGTVGLFLQPLLGNTGKS.

Residues 1–30 (MLNSRDQGNLHSGLCLWLCGFLALFKGSTG) form the signal peptide. At 31-240 (CESEEQLFHR…TYSFYIRRLP (210 aa)) the chain is on the extracellular side. N54 and N171 each carry an N-linked (GlcNAc...) asparagine glycan. Disulfide bonds link C158/C172 and C222/C223. A run of 3 helical transmembrane segments spans residues 241–265 (MFYT…FYLP), 272–290 (VTLC…LVIT), and 306–327 (YLLF…VLNI). Residues 328–465 (HYRTPATHTM…WKYMAMVVDR (138 aa)) lie on the Cytoplasmic side of the membrane. The interval 399–423 (QKSSDIAPGKRRSSQQPARWVAENS) is disordered. S401 bears the Phosphoserine mark. Residues 466 to 485 (VFLWVFIIVCVFGTVGLFLQ) form a helical membrane-spanning segment.

The protein belongs to the ligand-gated ion channel (TC 1.A.9) family. Acetylcholine receptor (TC 1.A.9.1) subfamily. Alpha-6/CHRNA6 sub-subfamily. As to quaternary structure, neuronal AChR is composed of two different types of subunits: alpha and non-alpha (beta). CHRNA6/alpha-6 subunit can be combined to CHRNB2/beta-2 and CHRNA4/alpha-4 to give rise to functional receptors. Interacts with LYPD6. As to expression, predominantly expressed in only a few brain areas, including dopaminergic neurons, norepirephrine neurons and cells of the visual system.

The protein resides in the synaptic cell membrane. It catalyses the reaction K(+)(in) = K(+)(out). The catalysed reaction is Na(+)(in) = Na(+)(out). It carries out the reaction Ca(2+)(in) = Ca(2+)(out). Its activity is regulated as follows. Activated by a myriad of ligands such as acetylcholine, cytisine and nicotine. CHRNA6 nAChR activity is inhibited by the antagonists alpha-conotoxin MII and PIA, a small disulfide-constrained peptides from cone snails. In terms of biological role, component of neuronal acetylcholine receptors (nAChRs) that function as pentameric, ligand-gated cation channels with high calcium permeability among other activities. nAChRs are excitatory neurotrasnmitter receptors formed by a collection of nAChR subunits known to mediate synaptic transmission in the nervous system and the neuromuscular junction. Each nAchR subunit confers differential attributes to channel properties, including activation, deactivation and desensitization kinetics, pH sensitivity, cation permeability, and binding to allosteric modulators. CHRNA6 forms pentameric channels with CHRNB2 and CHRNA4 that exhibit high sensitivity to ACh and nicotine and are predominantly expressed in only a few brain areas, including dopaminergic neurons, norepirephrine neurons and cells of the visual system. nAChrs containing CHRNA6 subunits mediate endogenous cholinergic modulation of dopamine and gamma-aminobutyric acid (GABA) release in response to nicotine at nerve terminals. This chain is Neuronal acetylcholine receptor subunit alpha-6 (Chrna6), found in Mus musculus (Mouse).